A 512-amino-acid chain; its full sequence is Capsid scaffolding protein (512 aa).

Residues His-47, Ser-115, and His-131 each act as charge relay system in the active site. The segment at 264–282 is interaction with pAP; sequence DLISTICSTTHTTHHDLVR. The tract at residues 376–407 is disordered; the sequence is RGSQKRCAPTDSDDEMSFPGDPDYTTKKKKRY. A Nuclear localization signal motif is present at residues 402–408; it reads KKKKRYR. The segment at 492–512 is interaction with major capsid protein; that stretch reads DQSLLSLNKKLFVEALNKMDN.

It belongs to the herpesviridae capsid scaffolding protein family. In terms of assembly, homomultimer. Interacts with major capsid protein. Exists in a monomer-dimer equilibrium with the dimer being the active species. In terms of processing, capsid scaffolding protein is cleaved by assemblin after formation of the spherical procapsid. As a result, the capsid obtains its mature, icosahedral shape. Cleavages occur at two or more sites: release (R-site) and maturation (M-site).

It localises to the host cytoplasm. Its subcellular location is the host nucleus. The catalysed reaction is Cleaves -Ala-|-Ser- and -Ala-|-Ala- bonds in the scaffold protein.. Its function is as follows. Acts as a scaffold protein by binding major capsid protein in the cytoplasm, inducing the nuclear localization of both proteins. Multimerizes in the nucleus such as major capsid protein forms the icosahedral T=16 capsid. Autocatalytic cleavage releases the assembly protein, and subsequently abolishes interaction with major capsid protein. Cleavages products are evicted from the capsid before or during DNA packaging. In terms of biological role, protease that plays an essential role in virion assembly within the nucleus. Catalyzes the cleavage of the assembly protein after formation of the spherical procapsid. By that cleavage, the capsid matures and gains its icosahedral shape. The cleavage sites seem to include -Ala-Ser-, -Ala-Ala-, as well as Ala-Thr bonds. Assemblin and cleavages products are evicted from the capsid before or during DNA packaging. Plays a major role in capsid assembly. Acts as a scaffold protein by binding major capsid protein. Multimerizes in the nucleus such as major capsid protein forms the icosahedral T=16 capsid. Cleaved by assemblin after capsid completion. The cleavages products are evicted from the capsid before or during DNA packaging. The chain is Capsid scaffolding protein (U53) from Human herpesvirus 7 (strain JI) (HHV-7).